The chain runs to 273 residues: 3-methyl-2-oxobutanoate hydroxymethyltransferase 2 (273 aa).

Mg(2+)-binding residues include aspartate 50 and aspartate 89. Residues 50-51, aspartate 89, and lysine 119 each bind 3-methyl-2-oxobutanoate; that span reads DS. Glutamate 121 provides a ligand contact to Mg(2+). The active-site Proton acceptor is the glutamate 188.

This sequence belongs to the PanB family. Homodecamer; pentamer of dimers. The cofactor is Mg(2+).

Its subcellular location is the cytoplasm. The catalysed reaction is 3-methyl-2-oxobutanoate + (6R)-5,10-methylene-5,6,7,8-tetrahydrofolate + H2O = 2-dehydropantoate + (6S)-5,6,7,8-tetrahydrofolate. It participates in cofactor biosynthesis; (R)-pantothenate biosynthesis; (R)-pantoate from 3-methyl-2-oxobutanoate: step 1/2. Functionally, catalyzes the reversible reaction in which hydroxymethyl group from 5,10-methylenetetrahydrofolate is transferred onto alpha-ketoisovalerate to form ketopantoate. The chain is 3-methyl-2-oxobutanoate hydroxymethyltransferase 2 from Zymomonas mobilis subsp. mobilis (strain ATCC 31821 / ZM4 / CP4).